The following is a 294-amino-acid chain: 2-dehydropantoate 2-reductase (294 aa).

NADP(+) contacts are provided by residues 10–15 (GAGALG), Arg34, Lys74, Asn98, and Ala122. Lys178 acts as the Proton donor in catalysis. Substrate-binding positions include Lys178, Asn182, Asn186, Asn196, and 243 to 246 (NRSS). Glu258 provides a ligand contact to NADP(+).

This sequence belongs to the ketopantoate reductase family.

It localises to the cytoplasm. It catalyses the reaction (R)-pantoate + NAD(+) = 2-dehydropantoate + NADH + H(+). The enzyme catalyses (R)-pantoate + NADP(+) = 2-dehydropantoate + NADPH + H(+). It participates in cofactor biosynthesis; coenzyme A biosynthesis. In terms of biological role, catalyzes the NAD(P)H-dependent reduction of ketopantoate into pantoic acid. The protein is 2-dehydropantoate 2-reductase of Archaeoglobus fulgidus (strain ATCC 49558 / DSM 4304 / JCM 9628 / NBRC 100126 / VC-16).